The sequence spans 268 residues: 5'-nucleotidase SurE (268 aa).

A divalent metal cation-binding residues include Asp-8, Asp-9, Ser-40, and Asn-98.

Belongs to the SurE nucleotidase family. A divalent metal cation serves as cofactor.

Its subcellular location is the cytoplasm. The catalysed reaction is a ribonucleoside 5'-phosphate + H2O = a ribonucleoside + phosphate. Nucleotidase that shows phosphatase activity on nucleoside 5'-monophosphates. The sequence is that of 5'-nucleotidase SurE from Trichodesmium erythraeum (strain IMS101).